The following is a 324-amino-acid chain: Methionyl-tRNA formyltransferase (324 aa).

114 to 117 (SLLP) lines the (6S)-5,6,7,8-tetrahydrofolate pocket.

This sequence belongs to the Fmt family.

It catalyses the reaction L-methionyl-tRNA(fMet) + (6R)-10-formyltetrahydrofolate = N-formyl-L-methionyl-tRNA(fMet) + (6S)-5,6,7,8-tetrahydrofolate + H(+). Its function is as follows. Attaches a formyl group to the free amino group of methionyl-tRNA(fMet). The formyl group appears to play a dual role in the initiator identity of N-formylmethionyl-tRNA by promoting its recognition by IF2 and preventing the misappropriation of this tRNA by the elongation apparatus. The protein is Methionyl-tRNA formyltransferase of Azobacteroides pseudotrichonymphae genomovar. CFP2.